We begin with the raw amino-acid sequence, 488 residues long: MKITADASDPAKRKTAALCGFVLEGAAGAAGLGGPGLDDLIKEAIGKNGGKKGRISMTGTPGMPSERVILAGLGPAGKVTSDGIRSEAGRLARQVRDMGLADFAVAAPSILDPAEEAALIVEGAELALYSFDEFKAEKAGNSPRLHILGGGPSAARAIKDAQSITAGVAFARGLANMPPNECPPDKLGRAAVKMCTGKKMRCIVLKKPELKKGGFGGIIAVGQGSSNEPRLIIVEYNGGKKGQKPIVLVGKAVTFDTGGISIKPGEKMDEMKFDKCGGCTVLGIMKAVEDLALPVNVIGIVPSVENMPGGSSYRPGDIVKLYSGKTAEILNTDAEGRLILADALSYGEKKYAPSEIIDFATLTGACIVALGNNVAGMVSNDDAFAKRIEGASERTAEEVWRLPINDDYMSMIKSEVADMRNLGMGRAAGTITAAAFLKNAIGDTPWVHLDIAGTAWNQPATKKKPYNPGGATGFGVRLVAGYLKGRAQ.

Positions 251 and 256 each coordinate Mn(2+). K263 is an active-site residue. Positions 274, 333, and 335 each coordinate Mn(2+). R337 is a catalytic residue.

This sequence belongs to the peptidase M17 family. Mn(2+) serves as cofactor.

The protein resides in the cytoplasm. It carries out the reaction Release of an N-terminal amino acid, Xaa-|-Yaa-, in which Xaa is preferably Leu, but may be other amino acids including Pro although not Arg or Lys, and Yaa may be Pro. Amino acid amides and methyl esters are also readily hydrolyzed, but rates on arylamides are exceedingly low.. The enzyme catalyses Release of an N-terminal amino acid, preferentially leucine, but not glutamic or aspartic acids.. In terms of biological role, presumably involved in the processing and regular turnover of intracellular proteins. Catalyzes the removal of unsubstituted N-terminal amino acids from various peptides. The chain is Probable cytosol aminopeptidase from Cenarchaeum symbiosum (strain A).